The sequence spans 263 residues: Thiazole synthase (263 aa).

Lys100 (schiff-base intermediate with DXP) is an active-site residue. Residues Gly161, 187–188 (AG), and 209–210 (NT) each bind 1-deoxy-D-xylulose 5-phosphate.

This sequence belongs to the ThiG family. In terms of assembly, homotetramer. Forms heterodimers with either ThiH or ThiS.

The protein localises to the cytoplasm. The catalysed reaction is [ThiS sulfur-carrier protein]-C-terminal-Gly-aminoethanethioate + 2-iminoacetate + 1-deoxy-D-xylulose 5-phosphate = [ThiS sulfur-carrier protein]-C-terminal Gly-Gly + 2-[(2R,5Z)-2-carboxy-4-methylthiazol-5(2H)-ylidene]ethyl phosphate + 2 H2O + H(+). The protein operates within cofactor biosynthesis; thiamine diphosphate biosynthesis. Its function is as follows. Catalyzes the rearrangement of 1-deoxy-D-xylulose 5-phosphate (DXP) to produce the thiazole phosphate moiety of thiamine. Sulfur is provided by the thiocarboxylate moiety of the carrier protein ThiS. In vitro, sulfur can be provided by H(2)S. This Shouchella clausii (strain KSM-K16) (Alkalihalobacillus clausii) protein is Thiazole synthase.